The chain runs to 169 residues: Ribosome maturation factor RimM (169 aa).

The PRC barrel domain occupies 91–167 (EGEYYFADLI…RIVIATDFAH (77 aa)).

The protein belongs to the RimM family. As to quaternary structure, binds ribosomal protein uS19.

Its subcellular location is the cytoplasm. Its function is as follows. An accessory protein needed during the final step in the assembly of 30S ribosomal subunit, possibly for assembly of the head region. Essential for efficient processing of 16S rRNA. May be needed both before and after RbfA during the maturation of 16S rRNA. It has affinity for free ribosomal 30S subunits but not for 70S ribosomes. This chain is Ribosome maturation factor RimM, found in Erythrobacter litoralis (strain HTCC2594).